Here is a 301-residue protein sequence, read N- to C-terminus: Protein SCO1 homolog, mitochondrial (301 aa).

Residues 1-67 (MAMLVLVPGR…PGYCLGTRPL (67 aa)) constitute a mitochondrion transit peptide. The disordered stretch occupies residues 63–91 (GTRPLSTARPPPPWSQKGPGDSTRPSKPG). The Mitochondrial matrix segment spans residues 68–92 (STARPPPPWSQKGPGDSTRPSKPGP). A helical transmembrane segment spans residues 93–111 (VSWKSLAITFAIGGALLAG). The Mitochondrial intermembrane segment spans residues 112 to 301 (MKHVKKEKAE…THMRPYRKKS (190 aa)). An important for dimerization region spans residues 118–131 (EKAEKLEKERQRHI). Cu cation-binding residues include cysteine 169, cysteine 173, and histidine 260. Cysteine 169 and cysteine 173 are joined by a disulfide.

This sequence belongs to the SCO1/2 family. As to quaternary structure, homodimer. Interacts with COA6. Found in a complex with TMEM177, COX20, COA6, MT-CO2/COX2, COX18 and SCO2. Interacts with TMEM177 in a COX20-dependent manner. Interacts with COX20 in a MT-CO2/COX2- and COX18-dependent manner. Interacts with COX16. In terms of tissue distribution, predominantly expressed in tissues characterized by high rates of oxidative phosphorylation (OxPhos), including muscle, heart, and brain.

It is found in the mitochondrion. Its subcellular location is the mitochondrion inner membrane. Functionally, copper metallochaperone essential for the maturation of cytochrome c oxidase subunit II (MT-CO2/COX2). Not required for the synthesis of MT-CO2/COX2 but plays a crucial role in stabilizing MT-CO2/COX2 during its subsequent maturation. Involved in transporting copper to the Cu(A) site on MT-CO2/COX2. Plays an important role in the regulation of copper homeostasis by controlling the abundance and cell membrane localization of copper transporter CTR1. The sequence is that of Protein SCO1 homolog, mitochondrial (SCO1) from Homo sapiens (Human).